Here is a 436-residue protein sequence, read N- to C-terminus: Cyclin-A2-2 (436 aa).

Belongs to the cyclin family. Cyclin AB subfamily. As to expression, expressed in roots, stems, leaves, flowers and siliques.

This Arabidopsis thaliana (Mouse-ear cress) protein is Cyclin-A2-2 (CYCA2-2).